The sequence spans 456 residues: Coenzyme F420 hydrogenase subunit alpha (456 aa).

Residues Cys-63, Cys-66, Cys-432, and Cys-435 each contribute to the Ni(2+) site.

This sequence belongs to the [NiFe]/[NiFeSe] hydrogenase large subunit family. Pentamer of two alpha chains, two beta chains and a gamma chain. Ni(2+) is required as a cofactor. Requires iron-sulfur cluster as cofactor. It depends on FAD as a cofactor.

Its subcellular location is the cell membrane. The catalysed reaction is oxidized coenzyme F420-(gamma-L-Glu)(n) + H2 + H(+) = reduced coenzyme F420-(gamma-L-Glu)(n). In terms of biological role, reduces the physiological low-potential two-electron acceptor coenzyme F420, and the artificial one-electron acceptor methylviologen. The polypeptide is Coenzyme F420 hydrogenase subunit alpha (frhA) (Methanosarcina barkeri (strain Fusaro / DSM 804)).